We begin with the raw amino-acid sequence, 701 residues long: Polyribonucleotide nucleotidyltransferase (701 aa).

Mg(2+) contacts are provided by aspartate 487 and aspartate 493. Positions 554–613 constitute a KH domain; that stretch reads PTMIAMKIDTDKIRDVIGKGGATIRAICEETKASIDIEDDGSIKIFGETKEAADAAKQRI. Residues 623–691 enclose the S1 motif domain; the sequence is GKIYVGKVER…NRGRIKLSIK (69 aa).

It belongs to the polyribonucleotide nucleotidyltransferase family. In terms of assembly, component of the RNA degradosome, which is a multiprotein complex involved in RNA processing and mRNA degradation. Mg(2+) serves as cofactor.

It is found in the cytoplasm. It carries out the reaction RNA(n+1) + phosphate = RNA(n) + a ribonucleoside 5'-diphosphate. Functionally, involved in mRNA degradation. Catalyzes the phosphorolysis of single-stranded polyribonucleotides processively in the 3'- to 5'-direction. The protein is Polyribonucleotide nucleotidyltransferase of Pseudomonas entomophila (strain L48).